The following is a 916-amino-acid chain: Nonsense-mediated mRNA decay factor SMG8 (916 aa).

The interval 566 to 626 is disordered; it reads LENSNRTPDT…KNYASQGDAD (61 aa). Polar residues predominate over residues 589–604; sequence LSGSQKSQDSASNLTF.

Belongs to the SMG8 family.

Involved in nonsense-mediated decay (NMD) of mRNAs containing premature stop codons. Probable component of kinase complex containing SMG1 and recruited to stalled ribosomes. The chain is Nonsense-mediated mRNA decay factor SMG8 from Aedes aegypti (Yellowfever mosquito).